The following is a 277-amino-acid chain: Urease accessory protein UreD (277 aa).

This sequence belongs to the UreD family. UreD, UreF and UreG form a complex that acts as a GTP-hydrolysis-dependent molecular chaperone, activating the urease apoprotein by helping to assemble the nickel containing metallocenter of UreC. The UreE protein probably delivers the nickel.

It localises to the cytoplasm. Required for maturation of urease via the functional incorporation of the urease nickel metallocenter. This chain is Urease accessory protein UreD, found in Pseudomonas putida (strain ATCC 47054 / DSM 6125 / CFBP 8728 / NCIMB 11950 / KT2440).